The following is a 923-amino-acid chain: Phosphoenolpyruvate carboxylase (923 aa).

Catalysis depends on residues H149 and K585.

It belongs to the PEPCase type 1 family. The cofactor is Mg(2+).

It catalyses the reaction oxaloacetate + phosphate = phosphoenolpyruvate + hydrogencarbonate. Its function is as follows. Forms oxaloacetate, a four-carbon dicarboxylic acid source for the tricarboxylic acid cycle. This chain is Phosphoenolpyruvate carboxylase, found in Nocardia farcinica (strain IFM 10152).